An 85-amino-acid chain; its full sequence is U4-theraphotoxin-Hhn1t (85 aa).

The first 22 residues, 1-22 (MKVTLIAILTCAAVLVLHTTAA), serve as a signal peptide directing secretion. Positions 23–48 (EELEAESQLMEVGMPDTELAAVDEER) are excised as a propeptide. Cystine bridges form between C52/C66, C56/C77, and C71/C82.

Belongs to the neurotoxin 12 (Hwtx-2) family. 02 (Hwtx-2) subfamily. Expressed by the venom gland.

Its subcellular location is the secreted. In terms of biological role, postsynaptic neurotoxin. The sequence is that of U4-theraphotoxin-Hhn1t from Cyriopagopus hainanus (Chinese bird spider).